The sequence spans 896 residues: DNA mismatch repair protein MutS (896 aa).

607–614 (GPNMSGKS) serves as a coordination point for ATP. The interval 809-835 (ANSVAPNTAASMPVEAADESQPVESET) is disordered.

This sequence belongs to the DNA mismatch repair MutS family.

Functionally, this protein is involved in the repair of mismatches in DNA. It is possible that it carries out the mismatch recognition step. This protein has a weak ATPase activity. The protein is DNA mismatch repair protein MutS of Lactiplantibacillus plantarum (strain ATCC BAA-793 / NCIMB 8826 / WCFS1) (Lactobacillus plantarum).